A 271-amino-acid chain; its full sequence is D-methionine-binding lipoprotein MetQ (271 aa).

A signal peptide spans 1–22 (MSLKFKSIAAISALIGTLTLVG). C23 carries N-palmitoyl cysteine lipidation. C23 carries S-diacylglycerol cysteine lipidation.

The protein belongs to the NlpA lipoprotein family.

The protein localises to the cell membrane. This protein is a component of a D-methionine permease, a binding protein-dependent, ATP-driven transport system. This Yersinia pestis protein is D-methionine-binding lipoprotein MetQ (metQ).